We begin with the raw amino-acid sequence, 43 residues long: METATLIAIFISCLIVSFTGYALYTAFGQPSKELRDPFEEHED.

The chain crosses the membrane as a helical span at residues 7–27 (IAIFISCLIVSFTGYALYTAF).

Belongs to the PsbN family.

The protein localises to the plastid. It localises to the chloroplast thylakoid membrane. Functionally, may play a role in photosystem I and II biogenesis. The sequence is that of Protein PsbN from Psilotum nudum (Whisk fern).